The sequence spans 123 residues: MALKIRLSRGGAKKRPFYKIVVADARAPRDGRFIEKVGTYNPMLPNDNGQRWILDEDRVKHWLSVGAQPTDRLVRFFADKGLVAKPVRAEQTKQPQPKAKAQQRAKDQAERDAAAAAEAAAGE.

The segment at 86–123 is disordered; that stretch reads PVRAEQTKQPQPKAKAQQRAKDQAERDAAAAAEAAAGE. The segment covering 93-102 has biased composition (low complexity); sequence KQPQPKAKAQ. The span at 104 to 113 shows a compositional bias: basic and acidic residues; it reads RAKDQAERDA. A compositionally biased stretch (low complexity) spans 114 to 123; the sequence is AAAAEAAAGE.

Belongs to the bacterial ribosomal protein bS16 family.

The protein is Small ribosomal subunit protein bS16 of Paramagnetospirillum magneticum (strain ATCC 700264 / AMB-1) (Magnetospirillum magneticum).